We begin with the raw amino-acid sequence, 79 residues long: Small ribosomal subunit protein uS17 (79 aa).

It belongs to the universal ribosomal protein uS17 family. Part of the 30S ribosomal subunit.

Functionally, one of the primary rRNA binding proteins, it binds specifically to the 5'-end of 16S ribosomal RNA. The polypeptide is Small ribosomal subunit protein uS17 (Rhizobium etli (strain CIAT 652)).